Consider the following 197-residue polypeptide: Holliday junction branch migration complex subunit RuvA (197 aa).

Positions methionine 1 to valine 63 are domain I. Residues aspartate 64–threonine 139 are domain II. The interval threonine 139–valine 143 is flexible linker. The interval asparagine 144–arginine 197 is domain III.

It belongs to the RuvA family. As to quaternary structure, homotetramer. Forms an RuvA(8)-RuvB(12)-Holliday junction (HJ) complex. HJ DNA is sandwiched between 2 RuvA tetramers; dsDNA enters through RuvA and exits via RuvB. An RuvB hexamer assembles on each DNA strand where it exits the tetramer. Each RuvB hexamer is contacted by two RuvA subunits (via domain III) on 2 adjacent RuvB subunits; this complex drives branch migration. In the full resolvosome a probable DNA-RuvA(4)-RuvB(12)-RuvC(2) complex forms which resolves the HJ.

It is found in the cytoplasm. Functionally, the RuvA-RuvB-RuvC complex processes Holliday junction (HJ) DNA during genetic recombination and DNA repair, while the RuvA-RuvB complex plays an important role in the rescue of blocked DNA replication forks via replication fork reversal (RFR). RuvA specifically binds to HJ cruciform DNA, conferring on it an open structure. The RuvB hexamer acts as an ATP-dependent pump, pulling dsDNA into and through the RuvAB complex. HJ branch migration allows RuvC to scan DNA until it finds its consensus sequence, where it cleaves and resolves the cruciform DNA. The sequence is that of Holliday junction branch migration complex subunit RuvA from Mycobacterium marinum (strain ATCC BAA-535 / M).